We begin with the raw amino-acid sequence, 1551 residues long: MSIEKVSILGKESIHVGYGIQSHIVEETIKCLASSTYVIISDTNMSKTPTYEKLQDSFQKELAKQRPQSRLLTYLIPPGENHKNRETKAEVEDFLLQQGCTRDTVILAVGGGVIGDMIGFVAATFMRGVRVVQVPTTLLSMVDSSVGGKTAIDTELGKNFIGAFHQPEFVFCDVSFLQTLPKRQLINGMAEVVKTAAIWDETEFTRLEGFAKRFLAEISAPTPNLESIKDELIKTVLGSVRVKAFVVSADEKEGGLRNLLNFGHTIGHAIEAILTPEALHGECVSIGMIKEAELSRYLGILPPSAVARLSKCLAAYGLPISVDEKIFSKIIGAKKNNLKIDSLIKKMLIDKKNDGSKIRCVLLESIGKCYESKAHQIFKEDIQVVMTDEVFVHPFANRHPESVSITPPGSKSISNRALILAALGEGTTRIKNLLHSDDTKHMLDAVVLMKGATVSFEDSGDTVVVQGHGGKLFACKEEIYLGNAGTASRFLTAVAALVNSTQDEKSVTLTGNARMQERPIAALVDALTTNGSKVDYLNKQGSLPLKIEAGNGFKGGRIELAATTSSQYVSAILMCAPYAEKEVTLSLVGGKPISQLYIDMTIAMMKDFGVDVTKSETEEYTYHIPKAVYQNPQEYVVESDASSATYPLAFAALTNSSCTIPNIGSSSLQGDARFAVDVLKPMGCTVEQTSKSTTVTGPPIGTLKALPEIDMEPMTDAFLTASVVAAVSQGTTTISGIANQRVKECNRIKAMVDELAKFGVSADETEDGISIHGVQLKDLKTPGGRGVKTYDDHRVAMSFSLLAGLCKDPVLIQERSTTGKTWPGWWDVLHSKFNAKLEGHEYIRQRSGSLRNGDRSIVIIGMRAAGKTTLSRWLAEHLNFKLLDLDQYLEKKLAVDIKLLVKEKGWDYFREKETEVLNECLEKFGKGHILATGGGIVEGEKPREALKNYTKSGGIVLHLHRDLKETVNFLSKDPTRPAYSDDIEEVWKRREKWYHECSNYHFYSTHCTSEAEFANLKLVFAKFVSKITGDDTFVLPATRSTFVTLTYPDLRKVPSLIKDVSETSNAVELRVDLLANQETAYIAEQIGLLRSVATDLPILYTVRTKSQCGQYPDEDEEGMRKLLMFGLKMGVDIIDLQLISSPSTIAEVISKRGHTKIIASHHDFTGDLKWDNVEWKNKYAQGVSIDADFVKLVGMAKTFDDNLLLENFRRQNTEKPLIGINMGPQGKLSRVLNKVLTPVTHELITDKPIGVGQLSLKEINQALFQIGGLLEKEFWVVGFPVSHSRSPALHNAAYAALGLPYKFDIFETDDAEKVYTQLMQKPTFGGLAVTIPLKLDIKKYCTELSESAKLIGAVNTVTPIADGRKGFLGDNTDWIGIANSFKKADFALASGVTNGLVVGGGGTSRAAIFALHSLGCQKIYLLNRTESKLQDLVDSFPDYDLEILLEKNASSVSIGLVVSCVPGDKALDETLMKKLDGVLSNNKGDKQTRPLLLEAAYKPRVTPIMELAKEKYDWTVIPGVEMLVNQGEAQFKLHTGYTAPYKVIHSAVLNE.

The tract at residues 1–379 (MSIEKVSILG…YESKAHQIFK (379 aa)) is 3-dehydroquinate synthase. NAD(+) contacts are provided by residues 42–44 (DTN), 80–83 (ENHK), 111–113 (GGV), and aspartate 116. Position 127 (arginine 127) interacts with 7-phospho-2-dehydro-3-deoxy-D-arabino-heptonate. Position 136 to 137 (136 to 137 (TT)) interacts with NAD(+). 7-phospho-2-dehydro-3-deoxy-D-arabino-heptonate-binding residues include aspartate 143 and lysine 149. Lysine 158 provides a ligand contact to NAD(+). Residue asparagine 159 coordinates 7-phospho-2-dehydro-3-deoxy-D-arabino-heptonate. Residues 176-179 (FLQT) and asparagine 187 contribute to the NAD(+) site. Glutamate 191 is a Zn(2+) binding site. 7-phospho-2-dehydro-3-deoxy-D-arabino-heptonate-binding positions include 191 to 194 (EVVK) and lysine 243. Glutamate 253 serves as the catalytic Proton acceptor; for 3-dehydroquinate synthase activity. 7-phospho-2-dehydro-3-deoxy-D-arabino-heptonate-binding positions include 257 to 261 (RNLLN) and histidine 264. Histidine 264 lines the Zn(2+) pocket. Histidine 268 acts as the Proton acceptor; for 3-dehydroquinate synthase activity in catalysis. 7-phospho-2-dehydro-3-deoxy-D-arabino-heptonate-binding residues include histidine 280 and lysine 351. Histidine 280 contacts Zn(2+). Positions 392–835 (VHPFANRHPE…WDVLHSKFNA (444 aa)) are EPSP synthase. The segment at 854–1044 (DRSIVIIGMR…LPATRSTFVT (191 aa)) is shikimate kinase. 861–868 (GMRAAGKT) is a binding site for ATP. The 3-dehydroquinase stretch occupies residues 1045 to 1258 (LTYPDLRKVP…IGVGQLSLKE (214 aa)). The Proton acceptor; for 3-dehydroquinate dehydratase activity role is filled by histidine 1162. The Schiff-base intermediate with substrate; for 3-dehydroquinate dehydratase activity role is filled by lysine 1191. The shikimate dehydrogenase stretch occupies residues 1271–1551 (EKEFWVVGFP…KVIHSAVLNE (281 aa)).

It in the N-terminal section; belongs to the sugar phosphate cyclases superfamily. Dehydroquinate synthase family. The protein in the 2nd section; belongs to the EPSP synthase family. This sequence in the 3rd section; belongs to the shikimate kinase family. In the 4th section; belongs to the type-I 3-dehydroquinase family. It in the C-terminal section; belongs to the shikimate dehydrogenase family. As to quaternary structure, homodimer. Zn(2+) is required as a cofactor.

The protein resides in the cytoplasm. The catalysed reaction is 7-phospho-2-dehydro-3-deoxy-D-arabino-heptonate = 3-dehydroquinate + phosphate. The enzyme catalyses 3-dehydroquinate = 3-dehydroshikimate + H2O. It carries out the reaction shikimate + NADP(+) = 3-dehydroshikimate + NADPH + H(+). It catalyses the reaction shikimate + ATP = 3-phosphoshikimate + ADP + H(+). The catalysed reaction is 3-phosphoshikimate + phosphoenolpyruvate = 5-O-(1-carboxyvinyl)-3-phosphoshikimate + phosphate. It functions in the pathway metabolic intermediate biosynthesis; chorismate biosynthesis; chorismate from D-erythrose 4-phosphate and phosphoenolpyruvate: step 2/7. The protein operates within metabolic intermediate biosynthesis; chorismate biosynthesis; chorismate from D-erythrose 4-phosphate and phosphoenolpyruvate: step 3/7. Its pathway is metabolic intermediate biosynthesis; chorismate biosynthesis; chorismate from D-erythrose 4-phosphate and phosphoenolpyruvate: step 4/7. It participates in metabolic intermediate biosynthesis; chorismate biosynthesis; chorismate from D-erythrose 4-phosphate and phosphoenolpyruvate: step 5/7. It functions in the pathway metabolic intermediate biosynthesis; chorismate biosynthesis; chorismate from D-erythrose 4-phosphate and phosphoenolpyruvate: step 6/7. Functionally, the AROM polypeptide catalyzes 5 consecutive enzymatic reactions in prechorismate polyaromatic amino acid biosynthesis. This chain is Pentafunctional AROM polypeptide 2, found in Lodderomyces elongisporus (strain ATCC 11503 / CBS 2605 / JCM 1781 / NBRC 1676 / NRRL YB-4239) (Yeast).